We begin with the raw amino-acid sequence, 400 residues long: Phosphoglycerate kinase (400 aa).

Substrate-binding positions include 23–25 (DLN), Arg38, 61–64 (HFGR), Arg120, and Arg153. ATP contacts are provided by residues Lys203, Glu325, and 355 to 358 (GGDT).

It belongs to the phosphoglycerate kinase family. As to quaternary structure, monomer.

The protein resides in the cytoplasm. It catalyses the reaction (2R)-3-phosphoglycerate + ATP = (2R)-3-phospho-glyceroyl phosphate + ADP. Its pathway is carbohydrate degradation; glycolysis; pyruvate from D-glyceraldehyde 3-phosphate: step 2/5. This Allorhizobium ampelinum (strain ATCC BAA-846 / DSM 112012 / S4) (Agrobacterium vitis (strain S4)) protein is Phosphoglycerate kinase.